The sequence spans 357 residues: DNA replication and repair protein RecF (357 aa).

Position 31-38 (31-38 (GQNGAGKT)) interacts with ATP.

It belongs to the RecF family.

The protein localises to the cytoplasm. Functionally, the RecF protein is involved in DNA metabolism; it is required for DNA replication and normal SOS inducibility. RecF binds preferentially to single-stranded, linear DNA. It also seems to bind ATP. This Coxiella burnetii (strain CbuK_Q154) (Coxiella burnetii (strain Q154)) protein is DNA replication and repair protein RecF.